The sequence spans 142 residues: Type 3 secretion system pilotin (142 aa).

Residues 1-23 (MIRHGSNKLKIFILSILLLTLSG) form the signal peptide. Cys24 carries N-palmitoyl cysteine lipidation. A lipid anchor (S-diacylglycerol cysteine) is attached at Cys24.

Belongs to the MxiM family. Monomer. Interacts with the secretin MxiD/SctC.

Its subcellular location is the cell outer membrane. Its function is as follows. Involved in the synthesis of the type III secretion system (T3SS), also called injectisome, which is used to inject bacterial effector proteins into eukaryotic host cells. Pilot protein that is required for the proper localization of the secretin MxiD/SctC in the outer membrane. Also influences both MxiD/SctC multimerization and stability. Required for both Ipa translocation and tissue culture cell invasion. Binds lipids. This chain is Type 3 secretion system pilotin, found in Shigella flexneri.